A 234-amino-acid polypeptide reads, in one-letter code: Eosinophil granule major basic protein 2 (234 aa).

The first 15 residues, 1–15, serve as a signal peptide directing secretion; that stretch reads MKLLLLLALLVGAVS. Residues 16-115 constitute a propeptide, acidic; the sequence is TRHLNVDTSS…VKFEGSPGCK (100 aa). Residues 26–96 are disordered; sequence LQSLQGEESL…SSELDMGPED (71 aa). O-linked (Xyl...) (glycosaminoglycan) serine glycosylation occurs at S69. A compositionally biased stretch (acidic residues) spans 71–94; it reads SEDDPEEEEEEKEMESSSELDMGP. One can recognise a C-type lectin domain in the interval 133-234; it reads SVCQRCFRGN…GVRRAFSCSY (102 aa). 2 disulfides stabilise this stretch: C135/C232 and C209/C224.

Nitrated.

Its subcellular location is the cytoplasmic granule. MBP may play some important roles in the allergic reactions and inflammations, since MBP is capable of releasing histamine from mast cells and damaging the epithelial cells of bronchial tubes. Antiparasitic and antibiotic. In Cavia porcellus (Guinea pig), this protein is Eosinophil granule major basic protein 2 (MBP2).